Here is a 98-residue protein sequence, read N- to C-terminus: MELSGEYVGCDGEPQRLRVSCEASGDADPLQSLSAGVVRMKELVAEFFGTLVEQDAQGLAEDPDDALDGDDEDDAEDENNSGRTNSDGPSAKRPKPAS.

At Met1 the chain carries N-acetylmethionine. The segment at 55-98 (DAQGLAEDPDDALDGDDEDDAEDENNSGRTNSDGPSAKRPKPAS) is disordered. Residues 61-79 (EDPDDALDGDDEDDAEDEN) are compositionally biased toward acidic residues.

In terms of assembly, component of the EKC/KEOPS complex composed of at least GON7, TP53RK, TPRKB, OSGEP and LAGE3; the whole complex dimerizes.

The protein resides in the nucleus. Its function is as follows. Component of the EKC/KEOPS complex that is required for the formation of a threonylcarbamoyl group on adenosine at position 37 (t(6)A37) in tRNAs that read codons beginning with adenine. The complex is probably involved in the transfer of the threonylcarbamoyl moiety of threonylcarbamoyl-AMP (TC-AMP) to the N6 group of A37. GON7 plays a supporting role to the catalytic subunit OSGEP in the complex. In Mus musculus (Mouse), this protein is EKC/KEOPS complex subunit GON7.